The sequence spans 37 residues: uncharacterized protein (37 aa).

Residues 16–36 (FALIVVLFILLIIVGTAFVGG) form a helical membrane-spanning segment.

Belongs to the SscA family.

The protein resides in the membrane. This is an uncharacterized protein from Bacillus subtilis (strain 168).